A 603-amino-acid polypeptide reads, in one-letter code: ABC transporter E family member 1 (603 aa).

4Fe-4S ferredoxin-type domains are found at residues 7-39 (RIAI…KLCI) and 46-75 (KSAF…IINL). ABC transporter domains are found at residues 70–315 (IQII…FLAG) and 344–566 (VKSY…LSHL). ATP is bound by residues 110–117 (GTNGIGKS) and 381–388 (GENGTGKT).

The protein belongs to the ABC transporter superfamily. ABCE family. In terms of tissue distribution, expressed in roots, stems, leaves, flowers and siliques.

It localises to the membrane. This chain is ABC transporter E family member 1 (ABCE1), found in Arabidopsis thaliana (Mouse-ear cress).